The primary structure comprises 172 residues: MMEDLKSIIRDIPDFPKKGIVFKDITTLLQDAQSYQRMIDLIAHRYVGQRVDKVVGVEARGFIIGAALAYKLCAGVVLVRKPGKLPSETFSKTYSLEYGTDTLEIHRDAIKPGERVLIADDLLATGGTMAAVVDMVLSMRAEIVDCCFMTELNFLNGRSKLPAGKVYSLLNF.

Belongs to the purine/pyrimidine phosphoribosyltransferase family. In terms of assembly, homodimer.

The protein localises to the cytoplasm. The enzyme catalyses AMP + diphosphate = 5-phospho-alpha-D-ribose 1-diphosphate + adenine. It participates in purine metabolism; AMP biosynthesis via salvage pathway; AMP from adenine: step 1/1. Its function is as follows. Catalyzes a salvage reaction resulting in the formation of AMP, that is energically less costly than de novo synthesis. In Pelobacter propionicus (strain DSM 2379 / NBRC 103807 / OttBd1), this protein is Adenine phosphoribosyltransferase.